A 292-amino-acid polypeptide reads, in one-letter code: Glycine--tRNA ligase alpha subunit (292 aa).

It belongs to the class-II aminoacyl-tRNA synthetase family. In terms of assembly, tetramer of two alpha and two beta subunits.

The protein resides in the cytoplasm. It catalyses the reaction tRNA(Gly) + glycine + ATP = glycyl-tRNA(Gly) + AMP + diphosphate. The protein is Glycine--tRNA ligase alpha subunit of Buchnera aphidicola subsp. Schizaphis graminum (strain Sg).